Reading from the N-terminus, the 321-residue chain is Lipoyl synthase (321 aa).

Positions 68, 73, 79, 94, 98, 101, and 308 each coordinate [4Fe-4S] cluster. One can recognise a Radical SAM core domain in the interval 80–297; that stretch reads FNHGTATFMI…KQEALAMGFT (218 aa).

Belongs to the radical SAM superfamily. Lipoyl synthase family. [4Fe-4S] cluster is required as a cofactor.

The protein localises to the cytoplasm. The enzyme catalyses [[Fe-S] cluster scaffold protein carrying a second [4Fe-4S](2+) cluster] + N(6)-octanoyl-L-lysyl-[protein] + 2 oxidized [2Fe-2S]-[ferredoxin] + 2 S-adenosyl-L-methionine + 4 H(+) = [[Fe-S] cluster scaffold protein] + N(6)-[(R)-dihydrolipoyl]-L-lysyl-[protein] + 4 Fe(3+) + 2 hydrogen sulfide + 2 5'-deoxyadenosine + 2 L-methionine + 2 reduced [2Fe-2S]-[ferredoxin]. Its pathway is protein modification; protein lipoylation via endogenous pathway; protein N(6)-(lipoyl)lysine from octanoyl-[acyl-carrier-protein]: step 2/2. Catalyzes the radical-mediated insertion of two sulfur atoms into the C-6 and C-8 positions of the octanoyl moiety bound to the lipoyl domains of lipoate-dependent enzymes, thereby converting the octanoylated domains into lipoylated derivatives. The protein is Lipoyl synthase of Sodalis glossinidius (strain morsitans).